The sequence spans 2094 residues: Protein Ycf2 (2094 aa).

1385 to 1392 is an ATP binding site; sequence GPPETGRS.

The protein belongs to the Ycf2 family.

It is found in the plastid. The protein localises to the chloroplast stroma. Functionally, probable ATPase of unknown function. Its presence in a non-photosynthetic plant (Epifagus virginiana) and experiments in tobacco indicate that it has an essential function which is probably not related to photosynthesis. In Huperzia lucidula (Shining clubmoss), this protein is Protein Ycf2.